Reading from the N-terminus, the 245-residue chain is 8-amino-3,8-dideoxy-manno-octulosonate cytidylyltransferase (245 aa).

Belongs to the KdsB family.

The protein resides in the cytoplasm. The catalysed reaction is 8-amino-3,8-dideoxy-alpha-D-manno-octulosonate + CTP = CMP-8-amino-3,8-dideoxy-alpha-D-manno-oct-2-ulosonate + diphosphate. Its pathway is bacterial outer membrane biogenesis; lipopolysaccharide biosynthesis. Functionally, activates KDO8N (a required 8-carbon sugar) for incorporation into bacterial lipopolysaccharide in the Shewanella genus. This Shewanella sp. (strain MR-7) protein is 8-amino-3,8-dideoxy-manno-octulosonate cytidylyltransferase.